The primary structure comprises 257 residues: Methylthioribulose-1-phosphate dehydratase (257 aa).

Cys-107 lines the substrate pocket. The Zn(2+) site is built by His-125 and His-127. Glu-148 (proton donor/acceptor) is an active-site residue. Position 210 (His-210) interacts with Zn(2+).

It belongs to the aldolase class II family. MtnB subfamily. Requires Zn(2+) as cofactor.

The protein localises to the cytoplasm. The enzyme catalyses 5-(methylsulfanyl)-D-ribulose 1-phosphate = 5-methylsulfanyl-2,3-dioxopentyl phosphate + H2O. The protein operates within amino-acid biosynthesis; L-methionine biosynthesis via salvage pathway; L-methionine from S-methyl-5-thio-alpha-D-ribose 1-phosphate: step 2/6. Functionally, catalyzes the dehydration of methylthioribulose-1-phosphate (MTRu-1-P) into 2,3-diketo-5-methylthiopentyl-1-phosphate (DK-MTP-1-P). This chain is Methylthioribulose-1-phosphate dehydratase, found in Lachancea thermotolerans (strain ATCC 56472 / CBS 6340 / NRRL Y-8284) (Yeast).